Reading from the N-terminus, the 232-residue chain is Ubiquinone biosynthesis O-methyltransferase (232 aa).

S-adenosyl-L-methionine-binding residues include Arg36, Gly55, Asp76, and Leu120.

It belongs to the methyltransferase superfamily. UbiG/COQ3 family.

The enzyme catalyses a 3-demethylubiquinol + S-adenosyl-L-methionine = a ubiquinol + S-adenosyl-L-homocysteine + H(+). It catalyses the reaction a 3-(all-trans-polyprenyl)benzene-1,2-diol + S-adenosyl-L-methionine = a 2-methoxy-6-(all-trans-polyprenyl)phenol + S-adenosyl-L-homocysteine + H(+). It functions in the pathway cofactor biosynthesis; ubiquinone biosynthesis. Functionally, O-methyltransferase that catalyzes the 2 O-methylation steps in the ubiquinone biosynthetic pathway. This Pseudomonas fluorescens (strain ATCC BAA-477 / NRRL B-23932 / Pf-5) protein is Ubiquinone biosynthesis O-methyltransferase.